Consider the following 389-residue polypeptide: Cytochrome b (389 aa).

The next 8 helical transmembrane spans lie at 32–52, 76–98, 113–133, 179–199, 225–245, 290–310, 325–345, and 353–373; these read FGFF…LLAM, WLLR…IHML, LWVS…LGYV, FFSL…LHII, FTIK…TFVF, LGVL…FLTI, LFWS…QPAA, and LYST…IYIV. 2 residues coordinate heme b: histidine 82 and histidine 96. The heme b site is built by histidine 183 and histidine 197.

It belongs to the cytochrome b family. As to quaternary structure, the main subunits of complex b-c1 are: cytochrome b, cytochrome c1 and the Rieske protein. Requires heme b as cofactor.

It is found in the mitochondrion inner membrane. Its function is as follows. Component of the ubiquinol-cytochrome c reductase complex (complex III or cytochrome b-c1 complex) that is part of the mitochondrial respiratory chain. The b-c1 complex mediates electron transfer from ubiquinol to cytochrome c. Contributes to the generation of a proton gradient across the mitochondrial membrane that is then used for ATP synthesis. The sequence is that of Cytochrome b (cytB) from Dictyostelium discoideum (Social amoeba).